We begin with the raw amino-acid sequence, 543 residues long: Keratin, type II cytoskeletal 75 (543 aa).

Residues 1–16 (MSRQSTITFQTSSRRG) show a composition bias toward polar residues. The tract at residues 1–48 (MSRQSTITFQTSSRRGFSTASATTPATSRSRFSSASVTHSPAGSGGLG) is disordered. Residues 1-144 (MSRQSTITFQ…DPNIQRVRKE (144 aa)) are head. Positions 17–36 (FSTASATTPATSRSRFSSAS) are enriched in low complexity. Positions 145–180 (EREQIKTLNNKFASFIDKVRFLEQQNKVLETKWSLL) are coil 1A. Positions 145–458 (EREQIKTLNN…KLLEGEECRL (314 aa)) constitute an IF rod domain. The segment at 181–199 (QEQGTRTVRQSLEPFFEAY) is linker 1. A coil 1B region spans residues 200–292 (ITDLRRQLDS…LFEAELCQMQ (93 aa)). A linker 12 region spans residues 293-315 (TRVSDTSVVLSMDNNRSLDLDSI). Positions 316-454 (IAEVKAQYEE…ATYRKLLEGE (139 aa)) are coil 2. Residues 455-543 (ECRLSGEGVS…TSSSRKSYKH (89 aa)) are tail. Positions 511-543 (SSFSNSSSRGLGGSGSSFKFVSTTSSSRKSYKH) are disordered. The span at 526-543 (SSFKFVSTTSSSRKSYKH) shows a compositional bias: low complexity.

Belongs to the intermediate filament family. Heterodimer of a type I and a type II keratin. May associate with KRT17.

Plays a central role in hair and nail formation. Essential component of keratin intermediate filaments in the companion layer of the hair follicle. The sequence is that of Keratin, type II cytoskeletal 75 (KRT75) from Bos taurus (Bovine).